We begin with the raw amino-acid sequence, 354 residues long: Uroporphyrinogen decarboxylase (354 aa).

Residues 27–31 (RQAGR), D77, Y154, T209, and H327 contribute to the substrate site.

It belongs to the uroporphyrinogen decarboxylase family. As to quaternary structure, homodimer.

The protein resides in the cytoplasm. The enzyme catalyses uroporphyrinogen III + 4 H(+) = coproporphyrinogen III + 4 CO2. Its pathway is porphyrin-containing compound metabolism; protoporphyrin-IX biosynthesis; coproporphyrinogen-III from 5-aminolevulinate: step 4/4. Functionally, catalyzes the decarboxylation of four acetate groups of uroporphyrinogen-III to yield coproporphyrinogen-III. In Enterobacter sp. (strain 638), this protein is Uroporphyrinogen decarboxylase.